The sequence spans 207 residues: 2,3-bisphosphoglycerate-dependent phosphoglycerate mutase (207 aa).

Substrate is bound by residues 10–17 (RHGQSEWN), 23–24 (TG), Arg-62, 89–92 (ERDY), Lys-100, 116–117 (RR), and 160–161 (GN). The Tele-phosphohistidine intermediate role is filled by His-11. Glu-89 functions as the Proton donor/acceptor in the catalytic mechanism.

The protein belongs to the phosphoglycerate mutase family. BPG-dependent PGAM subfamily. Homodimer.

It carries out the reaction (2R)-2-phosphoglycerate = (2R)-3-phosphoglycerate. Its pathway is carbohydrate degradation; glycolysis; pyruvate from D-glyceraldehyde 3-phosphate: step 3/5. Its function is as follows. Catalyzes the interconversion of 2-phosphoglycerate and 3-phosphoglycerate. The sequence is that of 2,3-bisphosphoglycerate-dependent phosphoglycerate mutase from Bradyrhizobium diazoefficiens (strain JCM 10833 / BCRC 13528 / IAM 13628 / NBRC 14792 / USDA 110).